Consider the following 131-residue polypeptide: UPF0102 protein YraN (131 aa).

Polar residues predominate over residues 1–19 (MATVPTRSGSPRQLTTKQT). Residues 1–21 (MATVPTRSGSPRQLTTKQTGD) are disordered.

This sequence belongs to the UPF0102 family.

This Escherichia coli O7:K1 (strain IAI39 / ExPEC) protein is UPF0102 protein YraN.